The sequence spans 191 residues: Cyclin-dependent kinase inhibitor 1 (191 aa).

The disordered stretch occupies residues 62 to 81 (LIHLEEEDKDGDTETSTYRR). A required for inhibitory function and interaction with CDK kinase complexes region spans residues 162–191 (QLKEKFKKKYNFDFEKEKPLEGRYEWVKLE).

This sequence belongs to the CDI family. ICK/KRP subfamily. Specifically interacts with CDKA-1, but not with CDKB1-1. Interacts with CYCD2-1 and CYCD3-1. Ubiquitinated independently by RKP and SCF (SKP1-CUL1-FBL5/SKP2B) protein ligase complex, leading to proteasomal degradation. Expressed at low levels in roots, stems, leaves and flowers.

It is found in the nucleus. Its subcellular location is the nucleoplasm. Binds and inhibits CYCD2-1/CDKA-1 kinase complex activity. Regulates cell division which is crucial for plant growth, development and morphogenesis. Functions in turning cells from a mitotic to an endoreplicating cell cycle mode. Acts cell- and non-cell-autonomously to regulate endoreduplication by allowing S phase progression, but blocking entry into mitosis. Keeps on the one hand the plant cell cycle locally controlled, and on the other hand provides a possibility of linking cell cycle control in single cells with the supracellular organization of a tissue or an organ. May target specifically CDKA-1. The sequence is that of Cyclin-dependent kinase inhibitor 1 (KRP1) from Arabidopsis thaliana (Mouse-ear cress).